A 465-amino-acid chain; its full sequence is A-type ATP synthase subunit B (465 aa).

The protein belongs to the ATPase alpha/beta chains family. As to quaternary structure, has multiple subunits with at least A(3), B(3), C, D, E, F, H, I and proteolipid K(x).

It is found in the cell membrane. Component of the A-type ATP synthase that produces ATP from ADP in the presence of a proton gradient across the membrane. The B chain is a regulatory subunit. The chain is A-type ATP synthase subunit B from Thermococcus onnurineus (strain NA1).